The primary structure comprises 458 residues: UDP-N-acetylmuramate--L-alanine ligase (458 aa).

112–118 (GTHGKTT) serves as a coordination point for ATP.

The protein belongs to the MurCDEF family.

It is found in the cytoplasm. The catalysed reaction is UDP-N-acetyl-alpha-D-muramate + L-alanine + ATP = UDP-N-acetyl-alpha-D-muramoyl-L-alanine + ADP + phosphate + H(+). The protein operates within cell wall biogenesis; peptidoglycan biosynthesis. Functionally, cell wall formation. In Geotalea daltonii (strain DSM 22248 / JCM 15807 / FRC-32) (Geobacter daltonii), this protein is UDP-N-acetylmuramate--L-alanine ligase.